The following is a 100-amino-acid chain: NADH-quinone oxidoreductase subunit K (100 aa).

Transmembrane regions (helical) follow at residues 4 to 24 (LQHG…GLII), 29 to 49 (LFML…FVVV), and 60 to 80 (VMFI…LALL).

The protein belongs to the complex I subunit 4L family. In terms of assembly, NDH-1 is composed of 13 different subunits. Subunits NuoA, H, J, K, L, M, N constitute the membrane sector of the complex.

The protein localises to the cell inner membrane. The enzyme catalyses a quinone + NADH + 5 H(+)(in) = a quinol + NAD(+) + 4 H(+)(out). Functionally, NDH-1 shuttles electrons from NADH, via FMN and iron-sulfur (Fe-S) centers, to quinones in the respiratory chain. The immediate electron acceptor for the enzyme in this species is believed to be ubiquinone. Couples the redox reaction to proton translocation (for every two electrons transferred, four hydrogen ions are translocated across the cytoplasmic membrane), and thus conserves the redox energy in a proton gradient. This Photorhabdus laumondii subsp. laumondii (strain DSM 15139 / CIP 105565 / TT01) (Photorhabdus luminescens subsp. laumondii) protein is NADH-quinone oxidoreductase subunit K.